The following is a 444-amino-acid chain: Protein Z-dependent protease inhibitor (444 aa).

The first 21 residues, 1–21 (MKVVPSLLLSVLLAQVWLVPG), serve as a signal peptide directing secretion. Residues 24-65 (PSPQSPETPAPQNQTSRVVQAPKEEEEDEQEASEEKASEEEK) form a disordered region. An N-linked (GlcNAc...) asparagine glycan is attached at N36. The residue at position 56 (S56) is a Phosphoserine; by FAM20C. The span at 56–65 (SEEKASEEEK) shows a compositional bias: basic and acidic residues. Positions 136–153 (TKPGLLPSLFKGLRETLS) are heparin-binding. N-linked (GlcNAc...) asparagine glycans are attached at residues N180, N197, and N295.

The protein belongs to the serpin family. In terms of assembly, interacts with PROZ. Post-translationally, phosphorylated by FAM20C in the extracellular medium. In terms of tissue distribution, expressed by the liver and secreted in plasma.

The protein resides in the secreted. Functionally, inhibits activity of the coagulation protease factor Xa in the presence of PROZ, calcium and phospholipids. Also inhibits factor XIa in the absence of cofactors. The protein is Protein Z-dependent protease inhibitor (SERPINA10) of Homo sapiens (Human).